The chain runs to 390 residues: Aspergillopepsin-1 (390 aa).

The first 19 residues, 1-19, serve as a signal peptide directing secretion; that stretch reads MVNTSLLAALTAYAVAVAA. A propeptide spans 20-67 (activation peptide); the sequence is APTAPQVKGFSVNQVAVPKGVYRHPAAQLAKAYGKYHATVPTQVAAAA. A Peptidase A1 domain is found at 84 to 387; sequence YITQVTVGDD…DASGPRLGFA (304 aa). Active-site residues include Asp100 and Asp281.

Belongs to the peptidase A1 family. In terms of assembly, monomer.

It localises to the secreted. It catalyses the reaction Hydrolysis of proteins with broad specificity. Generally favors hydrophobic residues in P1 and P1', but also accepts Lys in P1, which leads to activation of trypsinogen. Does not clot milk.. Its activity is regulated as follows. Inhibited by the microbial peptide pepstatin A. Its function is as follows. Secreted aspartic endopeptidase that allows assimilation of proteinaceous substrates. The scissile peptide bond is attacked by a nucleophilic water molecule activated by two aspartic residues in the active site. Shows a broad primary substrate specificity. Favors hydrophobic residues at the P1 and P1' positions, but also accepts a lysine residue in the P1 position, leading to the activation of trypsinogen and chymotrypsinogen A. Hydrolyzes myoglobin, hemoglobin and other natural proteins. Hydrolyzes equine myoglobin between positions 'Met-1' and 'Gly-2', 'Lys-43' and 'Phe-44', and 'Leu-70' and 'Thr-71'. The chain is Aspergillopepsin-1 (pepA) from Aspergillus pseudoglaucus (Eurotium repens).